A 282-amino-acid polypeptide reads, in one-letter code: 4-diphosphocytidyl-2-C-methyl-D-erythritol kinase (282 aa).

Lys12 is an active-site residue. 95-105 (PMGGGIGGGSS) contributes to the ATP binding site. The active site involves Asp137.

It belongs to the GHMP kinase family. IspE subfamily.

The catalysed reaction is 4-CDP-2-C-methyl-D-erythritol + ATP = 4-CDP-2-C-methyl-D-erythritol 2-phosphate + ADP + H(+). It functions in the pathway isoprenoid biosynthesis; isopentenyl diphosphate biosynthesis via DXP pathway; isopentenyl diphosphate from 1-deoxy-D-xylulose 5-phosphate: step 3/6. Its function is as follows. Catalyzes the phosphorylation of the position 2 hydroxy group of 4-diphosphocytidyl-2C-methyl-D-erythritol. The sequence is that of 4-diphosphocytidyl-2-C-methyl-D-erythritol kinase from Pseudomonas paraeruginosa (strain DSM 24068 / PA7) (Pseudomonas aeruginosa (strain PA7)).